The primary structure comprises 154 residues: MEDLLNEVVPQEDLERFEKKYHHELELDGEVTTDTKFEYAFCLVRSRYTNDVRKGIMILEELARTHPDGRRDYIYYLAFGNARIKEYTSGLKYCRAFLDIESNDQVRSLEEYIKKEIDKEVAKGMVVAGGAALVLGGILGLGIAMARNKQKREK.

Residues Met1–Gly124 are Cytoplasmic-facing. The chain crosses the membrane as a helical span at residues Met125–Met145. At Ala146–Lys154 the chain is on the mitochondrial intermembrane side.

It belongs to the FIS1 family.

It is found in the mitochondrion outer membrane. In terms of biological role, involved in the fragmentation of the mitochondrial network and its perinuclear clustering. Functions downstream of Pink1 and upstream of Drp1 to regulate mitochondrial fission. The chain is Mitochondrial fission 1 protein from Drosophila melanogaster (Fruit fly).